Reading from the N-terminus, the 348-residue chain is MIEADRLIAASGRDREEVQDRAIRPLSLDEYIGQPVVREQMALFIQAARGRGESLDHTLIFGPPGLGKTTLANIIAHEMGVSVKSTSGPILERPGDLAAMLTNLEPHDVLFIDEIHRLSPVVEEVLYPAMEDFQLDIMIGEGPAARSIKLDLPPFTLVGATTRAGMLTNPLRDRFGIVQRLEFYNDKDLSTIVSRSANILGLAIEDQGAYEIARRARGTPRIANRLLRRVRDYAEVRGKGQITKAVADMALNLLDVDERGFDHSDRRLLLTMIEKFDGGPVGVDNLAAAISEERHTIEDVLEPYLIQQGYIMRTPRGRVVTRHAYLHFGLNIPGRLGEGGDFSEPGDE.

Residues 4–184 are large ATPase domain (RuvB-L); sequence ADRLIAASGR…FGIVQRLEFY (181 aa). Residues Ile-23, Arg-24, Gly-65, Lys-68, Thr-69, Thr-70, 131–133, Arg-174, Tyr-184, and Arg-221 each bind ATP; that span reads EDF. Residue Thr-69 coordinates Mg(2+). Residues 185–255 form a small ATPAse domain (RuvB-S) region; that stretch reads NDKDLSTIVS…VADMALNLLD (71 aa). A head domain (RuvB-H) region spans residues 258-348; sequence ERGFDHSDRR…GGDFSEPGDE (91 aa). Arg-294, Arg-313, and Arg-318 together coordinate DNA.

It belongs to the RuvB family. As to quaternary structure, homohexamer. Forms an RuvA(8)-RuvB(12)-Holliday junction (HJ) complex. HJ DNA is sandwiched between 2 RuvA tetramers; dsDNA enters through RuvA and exits via RuvB. An RuvB hexamer assembles on each DNA strand where it exits the tetramer. Each RuvB hexamer is contacted by two RuvA subunits (via domain III) on 2 adjacent RuvB subunits; this complex drives branch migration. In the full resolvosome a probable DNA-RuvA(4)-RuvB(12)-RuvC(2) complex forms which resolves the HJ.

The protein resides in the cytoplasm. It carries out the reaction ATP + H2O = ADP + phosphate + H(+). Its function is as follows. The RuvA-RuvB-RuvC complex processes Holliday junction (HJ) DNA during genetic recombination and DNA repair, while the RuvA-RuvB complex plays an important role in the rescue of blocked DNA replication forks via replication fork reversal (RFR). RuvA specifically binds to HJ cruciform DNA, conferring on it an open structure. The RuvB hexamer acts as an ATP-dependent pump, pulling dsDNA into and through the RuvAB complex. RuvB forms 2 homohexamers on either side of HJ DNA bound by 1 or 2 RuvA tetramers; 4 subunits per hexamer contact DNA at a time. Coordinated motions by a converter formed by DNA-disengaged RuvB subunits stimulates ATP hydrolysis and nucleotide exchange. Immobilization of the converter enables RuvB to convert the ATP-contained energy into a lever motion, pulling 2 nucleotides of DNA out of the RuvA tetramer per ATP hydrolyzed, thus driving DNA branch migration. The RuvB motors rotate together with the DNA substrate, which together with the progressing nucleotide cycle form the mechanistic basis for DNA recombination by continuous HJ branch migration. Branch migration allows RuvC to scan DNA until it finds its consensus sequence, where it cleaves and resolves cruciform DNA. This chain is Holliday junction branch migration complex subunit RuvB, found in Pseudomonas putida (strain ATCC 47054 / DSM 6125 / CFBP 8728 / NCIMB 11950 / KT2440).